A 274-amino-acid chain; its full sequence is MTFLDKLATAQQTNGSLLCVGLDPEPAKFPGQLKGDASRIYDFCARIVDATAGLVIAFKPQIAYFAAHRAEAQLEQLMEHMRRNAPGVPVILDAKRGDIGSTAEQYAIEAFERYGADAVTLSPFMGFDSVAPYLKHQGKGAFLLCRTSNPGGSDLQGQRLAGIEGQPFLYEHVARLAQGPWNLNGQLGLVVGATYPAEIERVRELAPTVPLLIPGVGAQGGDAVATVRAGWRPDAPIIVNSSRAIIYASSGDDFAEAAQKAARSTRDALEAAKP.

K95 serves as the catalytic Proton donor.

The protein belongs to the OMP decarboxylase family. Type 2 subfamily.

It carries out the reaction orotidine 5'-phosphate + H(+) = UMP + CO2. It functions in the pathway pyrimidine metabolism; UMP biosynthesis via de novo pathway; UMP from orotate: step 2/2. In Variovorax paradoxus (strain S110), this protein is Orotidine 5'-phosphate decarboxylase.